Consider the following 100-residue polypeptide: Cell division protein FtsB (100 aa).

The Cytoplasmic segment spans residues 1–3 (MKW). A helical transmembrane segment spans residues 4 to 21 (LAIILVVALLALQYRLWM). Topologically, residues 22–100 (GEGSIASVVS…TDKDTKKNKK (79 aa)) are periplasmic. Positions 26-73 (IASVVSLNREIAKQKEENARLRERNRLLAAEVDALKQGKDAIEERARN) form a coiled coil.

This sequence belongs to the FtsB family. In terms of assembly, part of a complex composed of FtsB, FtsL and FtsQ.

It localises to the cell inner membrane. Essential cell division protein. May link together the upstream cell division proteins, which are predominantly cytoplasmic, with the downstream cell division proteins, which are predominantly periplasmic. The polypeptide is Cell division protein FtsB (Saccharophagus degradans (strain 2-40 / ATCC 43961 / DSM 17024)).